The primary structure comprises 66 residues: Large ribosomal subunit protein uL29 (66 aa).

It belongs to the universal ribosomal protein uL29 family.

This is Large ribosomal subunit protein uL29 from Brucella abortus (strain S19).